The sequence spans 293 residues: 4-hydroxy-tetrahydrodipicolinate synthase (293 aa).

A pyruvate-binding site is contributed by threonine 44. Catalysis depends on tyrosine 132, which acts as the Proton donor/acceptor. The active-site Schiff-base intermediate with substrate is lysine 160. Residue isoleucine 204 participates in pyruvate binding.

This sequence belongs to the DapA family. Homotetramer; dimer of dimers.

Its subcellular location is the cytoplasm. It carries out the reaction L-aspartate 4-semialdehyde + pyruvate = (2S,4S)-4-hydroxy-2,3,4,5-tetrahydrodipicolinate + H2O + H(+). It functions in the pathway amino-acid biosynthesis; L-lysine biosynthesis via DAP pathway; (S)-tetrahydrodipicolinate from L-aspartate: step 3/4. In terms of biological role, catalyzes the condensation of (S)-aspartate-beta-semialdehyde [(S)-ASA] and pyruvate to 4-hydroxy-tetrahydrodipicolinate (HTPA). This chain is 4-hydroxy-tetrahydrodipicolinate synthase, found in Hyphomonas neptunium (strain ATCC 15444).